The chain runs to 880 residues: MEKSIAKGLSDKLYEKRKAAALELEKLVKQCVLEGDYDRIDKIIDELCRDYAYALHQPMARNAGLMGLAATAIALGINDVGRYLRNILPPVLACFGDQNDQVRFYACESLYNIAKIAKGEILVYFNEIFDVLCKISADTENSVRGAAELLDRLIKDIVAERASNYISIVNNGSHGLLPAIKTDPISGDVYQEEYEQDNQLAFSLPKFIPLLTERIYAINPDTRVFLVDWLKVLLNTPGLELISYLPSFLGGLFTFLGDSHKDVRTVTHTLMDSLLHEVDRISKLQTEIKMKRLERLKMLEDKYNNSSTPTKKADGALIAEKKKTLMTALGGLSKPLSMETDDTKLSNTNETDDERHLTSQEQLLDSEATSQEPLRDGEEYIPGQDINLNFPEVITVLVNNLASSEAEIQLIALHWIQVILSISPNVFIPFLSKILSVLLKLLSDSDPHITEIAQLVNGQLLSLCSSYVGKETDGKIAYGPIVNSLTLQFFDSRIDAKIACLDWLILIYHKAPNQILKHNDSMFLTLLKSLSNRDSVLIEKALSLLQSLCSDSNDNYLRQFLQDLLTLFKRDTKLVKTRANFIMRQISSRLSPERVYKVISSILDNYNDTTFVKMMIQILSTNLITSPEMSSLRNKLRTCEDGMFFNSLFKSWCPNPVSVISLCFVAENYELAYTVLQTYANYELKLNDLVQLDILIQLFESPVFTRMRLQLLEQQKHPFLHKCLFGILMIIPQSKAFETLNRRLNSLNIWTSQSYVMNNYIRQRENSNFCDSNSDISQRSVSQSKLHFQELINHFKAVSEEDEYSSDMIRLDHGANNKSLLLGSFLDGIDEDKQEIVTPISPMNEAINEEMESPNDNSSVILKDSGSLPFNRNVSDKLKK.

2 HEAT repeats span residues 82-119 (RYLRNILPPVLACFGDQNDQVRFYACESLYNIAKIAKG) and 243-280 (SYLPSFLGGLFTFLGDSHKDVRTVTHTLMDSLLHEVDR). The disordered stretch occupies residues 333-373 (SKPLSMETDDTKLSNTNETDDERHLTSQEQLLDSEATSQEP). Polar residues predominate over residues 359 to 372 (SQEQLLDSEATSQE). 3 HEAT repeats span residues 388 to 425 (LNFPEVITVLVNNLASSEAEIQLIALHWIQVILSISPN), 429 to 466 (PFLSKILSVLLKLLSDSDPHITEIAQLVNGQLLSLCSS), and 517 to 554 (KHNDSMFLTLLKSLSNRDSVLIEKALSLLQSLCSDSND). 3 positions are modified to phosphoserine: serine 767, serine 805, and serine 867. The segment at 850–880 (EMESPNDNSSVILKDSGSLPFNRNVSDKLKK) is disordered.

This sequence belongs to the VAC14 family. As to quaternary structure, component of the PI(3,5)P2 regulatory complex, composed of ATG18, FIG4, FAB1, VAC14 and VAC7. VAC14 nucleates the assembly of the complex and serves as a scaffold.

It localises to the vacuole membrane. Its function is as follows. The PI(3,5)P2 regulatory complex regulates both the synthesis and turnover of phosphatidylinositol 3,5-bisphosphate (PtdIns(3,5)P2). Regulates the synthesis of PtdIns(3,5)P2 by positive activation of FAB1 and by controlling FIG4 localization. Required for FIG4-mediated turnover of PtdIns(3,5)P2 after hyperosmotic shock. Essential for the control of trafficking of some proteins to the vacuole lumen via the multivesicular body (MVB), and for maintenance of vacuole size and acidity. In Saccharomyces cerevisiae (strain ATCC 204508 / S288c) (Baker's yeast), this protein is Vacuole morphology and inheritance protein 14 (VAC14).